Reading from the N-terminus, the 104-residue chain is Inner membrane protein YjcH (104 aa).

The Cytoplasmic portion of the chain corresponds to Met-1 to Arg-24. A helical membrane pass occupies residues Phe-25–Ala-47. At Pro-48–Val-61 the chain is on the periplasmic side. The chain crosses the membrane as a helical span at residues Thr-62–Trp-84. The Cytoplasmic segment spans residues Arg-85 to Ser-104.

It is found in the cell inner membrane. This is Inner membrane protein YjcH (yjcH) from Escherichia coli (strain K12).